The chain runs to 269 residues: Hemin import ATP-binding protein HmuV (269 aa).

The ABC transporter domain maps to 5–242 (IETHSVTMRI…GLIRKVFEVC (238 aa)). Residue 37 to 44 (GPNGAGKS) coordinates ATP.

Belongs to the ABC transporter superfamily. Heme (hemin) importer (TC 3.A.1.14.5) family. The complex is composed of two ATP-binding proteins (HmuV), two transmembrane proteins (HmuU) and a solute-binding protein (HmuT).

Its subcellular location is the cell inner membrane. In terms of biological role, part of the ABC transporter complex HmuTUV involved in hemin import. Responsible for energy coupling to the transport system. This is Hemin import ATP-binding protein HmuV from Nitrobacter winogradskyi (strain ATCC 25391 / DSM 10237 / CIP 104748 / NCIMB 11846 / Nb-255).